We begin with the raw amino-acid sequence, 162 residues long: Caveolin-2 (162 aa).

Residues 1–86 lie on the Cytoplasmic side of the membrane; it reads MGLEKEKLEC…FELVKFIFYR (86 aa). An intramembrane region (helical) is located at residues 87–107; sequence LLTTLLAVPAAFILGVVFGVL. Topologically, residues 108–162 are cytoplasmic; it reads SCIHIWLVMPVTRSFLMLLPSIQVVWKSVTDMFITPLFHSMGRSLSSIQVRTSDT.

The protein belongs to the caveolin family. In terms of assembly, homooligomer.

The protein resides in the golgi apparatus membrane. It localises to the cell membrane. Its subcellular location is the membrane. It is found in the caveola. Functionally, may act as a scaffolding protein within caveolar membranes. Interacts directly with G-protein alpha subunits and can functionally regulate their activity. The sequence is that of Caveolin-2 (cav2) from Takifugu rubripes (Japanese pufferfish).